Consider the following 314-residue polypeptide: Carbamate kinase (314 aa).

The protein belongs to the carbamate kinase family. As to quaternary structure, homodimer.

The protein localises to the cytoplasm. It catalyses the reaction hydrogencarbonate + NH4(+) + ATP = carbamoyl phosphate + ADP + H2O + H(+). It functions in the pathway metabolic intermediate metabolism; carbamoyl phosphate degradation; CO(2) and NH(3) from carbamoyl phosphate: step 1/1. The sequence is that of Carbamate kinase (arcC) from Clostridium perfringens (strain 13 / Type A).